The chain runs to 144 residues: Large ribosomal subunit protein uL15 (144 aa).

The segment at 1 to 53 (MRLNTLSPAQGAKQAPKRVGRGIGSGLGKTGGRGHKGQNSRTGGGVRRGFEGG) is disordered. Residues 21–31 (RGIGSGLGKTG) show a composition bias toward gly residues.

Belongs to the universal ribosomal protein uL15 family. In terms of assembly, part of the 50S ribosomal subunit.

Its function is as follows. Binds to the 23S rRNA. This is Large ribosomal subunit protein uL15 from Hamiltonella defensa subsp. Acyrthosiphon pisum (strain 5AT).